Here is a 266-residue protein sequence, read N- to C-terminus: Glucosamine-6-phosphate deaminase (266 aa).

The Proton acceptor; for enolization step role is filled by aspartate 72. Catalysis depends on aspartate 141, which acts as the For ring-opening step. Histidine 143 (proton acceptor; for ring-opening step) is an active-site residue. The active-site For ring-opening step is glutamate 148.

The protein belongs to the glucosamine/galactosamine-6-phosphate isomerase family. NagB subfamily. As to quaternary structure, homohexamer.

It carries out the reaction alpha-D-glucosamine 6-phosphate + H2O = beta-D-fructose 6-phosphate + NH4(+). It functions in the pathway amino-sugar metabolism; N-acetylneuraminate degradation; D-fructose 6-phosphate from N-acetylneuraminate: step 5/5. With respect to regulation, allosterically activated by N-acetylglucosamine 6-phosphate (GlcNAc6P). Its function is as follows. Catalyzes the reversible isomerization-deamination of glucosamine 6-phosphate (GlcN6P) to form fructose 6-phosphate (Fru6P) and ammonium ion. The protein is Glucosamine-6-phosphate deaminase of Cronobacter sakazakii (strain ATCC BAA-894) (Enterobacter sakazakii).